The primary structure comprises 224 residues: UPF0758 protein Tola_0183 (224 aa).

The MPN domain maps to 102–224 (SLTSPQLVRR…PVSFAERGWL (123 aa)). Zn(2+)-binding residues include histidine 173, histidine 175, and aspartate 186. The short motif at 173 to 186 (HNHPSGVAEPSHAD) is the JAMM motif element.

This sequence belongs to the UPF0758 family.

The sequence is that of UPF0758 protein Tola_0183 from Tolumonas auensis (strain DSM 9187 / NBRC 110442 / TA 4).